We begin with the raw amino-acid sequence, 339 residues long: Phenylalanine--tRNA ligase alpha subunit (339 aa).

Glu250 contributes to the Mg(2+) binding site.

It belongs to the class-II aminoacyl-tRNA synthetase family. Phe-tRNA synthetase alpha subunit type 1 subfamily. In terms of assembly, tetramer of two alpha and two beta subunits. Mg(2+) is required as a cofactor.

The protein localises to the cytoplasm. The enzyme catalyses tRNA(Phe) + L-phenylalanine + ATP = L-phenylalanyl-tRNA(Phe) + AMP + diphosphate + H(+). This chain is Phenylalanine--tRNA ligase alpha subunit, found in Bacteroides thetaiotaomicron (strain ATCC 29148 / DSM 2079 / JCM 5827 / CCUG 10774 / NCTC 10582 / VPI-5482 / E50).